Reading from the N-terminus, the 75-residue chain is Putative antitoxin VapB17 (75 aa).

Its function is as follows. Putative antitoxin component of a possible type II toxin-antitoxin (TA) system. The cognate toxin is VapC17. The polypeptide is Putative antitoxin VapB17 (vapB17) (Mycobacterium tuberculosis (strain CDC 1551 / Oshkosh)).